Reading from the N-terminus, the 244-residue chain is NAD(P)H-quinone oxidoreductase subunit K (244 aa).

4 residues coordinate [4Fe-4S] cluster: cysteine 51, cysteine 52, cysteine 116, and cysteine 147.

Belongs to the complex I 20 kDa subunit family. As to quaternary structure, NDH-1 can be composed of about 15 different subunits; different subcomplexes with different compositions have been identified which probably have different functions. [4Fe-4S] cluster is required as a cofactor.

Its subcellular location is the cellular thylakoid membrane. The catalysed reaction is a plastoquinone + NADH + (n+1) H(+)(in) = a plastoquinol + NAD(+) + n H(+)(out). The enzyme catalyses a plastoquinone + NADPH + (n+1) H(+)(in) = a plastoquinol + NADP(+) + n H(+)(out). Functionally, NDH-1 shuttles electrons from an unknown electron donor, via FMN and iron-sulfur (Fe-S) centers, to quinones in the respiratory and/or the photosynthetic chain. The immediate electron acceptor for the enzyme in this species is believed to be plastoquinone. Couples the redox reaction to proton translocation, and thus conserves the redox energy in a proton gradient. Cyanobacterial NDH-1 also plays a role in inorganic carbon-concentration. The chain is NAD(P)H-quinone oxidoreductase subunit K from Synechococcus sp. (strain JA-2-3B'a(2-13)) (Cyanobacteria bacterium Yellowstone B-Prime).